We begin with the raw amino-acid sequence, 250 residues long: Probable transcriptional regulatory protein Cvib_1432 (250 aa).

Belongs to the TACO1 family.

Its subcellular location is the cytoplasm. The sequence is that of Probable transcriptional regulatory protein Cvib_1432 from Chlorobium phaeovibrioides (strain DSM 265 / 1930) (Prosthecochloris vibrioformis (strain DSM 265)).